Reading from the N-terminus, the 197-residue chain is Large ribosomal subunit protein bL25 (197 aa).

Belongs to the bacterial ribosomal protein bL25 family. CTC subfamily. As to quaternary structure, part of the 50S ribosomal subunit; part of the 5S rRNA/L5/L18/L25 subcomplex. Contacts the 5S rRNA. Binds to the 5S rRNA independently of L5 and L18.

This is one of the proteins that binds to the 5S RNA in the ribosome where it forms part of the central protuberance. The sequence is that of Large ribosomal subunit protein bL25 from Lawsonia intracellularis (strain PHE/MN1-00).